We begin with the raw amino-acid sequence, 542 residues long: Katanin p60 ATPase-containing subunit A-like 2 (542 aa).

Residues 25 to 57 enclose the LisH domain; the sequence is RRKNLLILIMHYLLQEGYMDSANSLEQETKISL. Disordered regions lie at residues 94 to 126 and 142 to 168; these read LDHD…RIAQ and HAHQ…ASEI. Over residues 114–126 the composition is skewed to polar residues; that stretch reads GSNSTQGLPRIAQ. 298-305 lines the ATP pocket; that stretch reads GPPGTGKT.

It belongs to the AAA ATPase family. Katanin p60 subunit A1 subfamily. A-like 2 sub-subfamily.

Its subcellular location is the cytoplasm. It is found in the cytoskeleton. The protein resides in the spindle. The protein localises to the spindle pole. It carries out the reaction n ATP + n H2O + a microtubule = n ADP + n phosphate + (n+1) alpha/beta tubulin heterodimers.. Functionally, severs microtubules in vitro in an ATP-dependent manner. This activity may promote rapid reorganization of cellular microtubule arrays. The protein is Katanin p60 ATPase-containing subunit A-like 2 (katnal2) of Xenopus tropicalis (Western clawed frog).